The following is a 777-amino-acid chain: NAD(P)H-quinone oxidoreductase subunit 5, chloroplastic (777 aa).

The next 16 helical transmembrane spans lie at 9–29, 40–60, 89–109, 125–145, 147–167, 185–205, 220–240, 259–279, 290–312, 328–348, 355–375, 397–417, 426–446, 550–570, 604–624, and 731–751; these read WIIPFIPLPVPILIGMGLLLF, WSFPSILLLSMVMLLSVYLSI, IDPLASIMLILITTVGILVLF, FAYLSFFNTSMLGLVTSSNLI, IYIFWELVGMCSYLLIGFWFT, GDFGLLLGILGLYWITGSFEF, NQVHFLFVTLCSFLLFAGAVA, TPISALIHAATMVAAGIFLVA, YIMNLISLIGIITVLLGATLALA, LGYMMLALGMGSYRAALFHLI, ALLFLGSGSIIHSMESIVGYS, TAFLVGTLSLCGIPPLACFWS, WLYSPIFAIIACSTAGFTAFY, LFSLFVLVLFTLFVAAIGIPF, FVTNASFSVSIALLGIFIATF, and IFIFIFLLMDSFFTNLPFFVL.

It belongs to the complex I subunit 5 family. In terms of assembly, NDH is composed of at least 16 different subunits, 5 of which are encoded in the nucleus.

The protein resides in the plastid. It localises to the chloroplast thylakoid membrane. It catalyses the reaction a plastoquinone + NADH + (n+1) H(+)(in) = a plastoquinol + NAD(+) + n H(+)(out). The enzyme catalyses a plastoquinone + NADPH + (n+1) H(+)(in) = a plastoquinol + NADP(+) + n H(+)(out). Its function is as follows. NDH shuttles electrons from NAD(P)H:plastoquinone, via FMN and iron-sulfur (Fe-S) centers, to quinones in the photosynthetic chain and possibly in a chloroplast respiratory chain. The immediate electron acceptor for the enzyme in this species is believed to be plastoquinone. Couples the redox reaction to proton translocation, and thus conserves the redox energy in a proton gradient. This Oenothera elata subsp. hookeri (Hooker's evening primrose) protein is NAD(P)H-quinone oxidoreductase subunit 5, chloroplastic (ndhF).